The primary structure comprises 678 residues: Vitrin (678 aa).

An N-terminal signal peptide occupies residues 1 to 26 (MRTVVLTMKASVIEMFLVLLVTGVHS). An LCCL domain is found at 40–133 (TVPQINCDVK…LSLPRWRESF (94 aa)). 2 cysteine pairs are disulfide-bonded: Cys46-Cys62 and Cys66-Cys86. Positions 154-168 (SSKSPAAQAGETTKA) are enriched in polar residues. Disordered stretches follow at residues 154–177 (SSKSPAAQAGETTKAYQRPPIPGT) and 199–257 (TLPR…GAAF). The span at 199–216 (TLPRPSPSAASTTSIPRP) shows a compositional bias: low complexity. Positions 230–240 (STATYTSSQNR) are enriched in polar residues. VWFA domains lie at 293–478 (DLSF…VKRV) and 495–668 (DIGF…IQNI). N-linked (GlcNAc...) asparagine glycans are attached at residues Asn390 and Asn520.

As to quaternary structure, binds dermatan sulfate and chondroitin sulfate.

It is found in the secreted. Its subcellular location is the extracellular space. The protein resides in the extracellular matrix. Promotes matrix assembly and cell adhesiveness. Plays a role in spinal cord formation by regulating the proliferation and differentiation of neural stem cells. In Homo sapiens (Human), this protein is Vitrin (VIT).